Reading from the N-terminus, the 826-residue chain is Arf-GAP with ANK repeat and PH domain-containing protein cnt-1 (826 aa).

The 99-residue stretch at 275-373 (DVMMEGYLYK…WMRALQRTIL (99 aa)) folds into the PH domain. Positions 447-572 (TTAFEQVRRV…RFAVAEDTRA (126 aa)) constitute an Arf-GAP domain. Residues 462–485 (CADCGSPAPKWVSINLGVVLCIEC) form a C4-type zinc finger. Positions 570-604 (TRARSSATNRQEHLKHKTSIGGNSSSNGVNRSSSY) are disordered. Low complexity predominate over residues 588-603 (SIGGNSSSNGVNRSSS). ANK repeat units lie at residues 690-719 (NGTTALHIATRNGQTAAVEFLLLNGAKINM), 723-752 (KLNTPLHLAAKEGHTLPVCQLLKRGADSNL), and 756-789 (DSKTPLDIAMECTHADIVTLFRVTIMRNDFNADF).

As to quaternary structure, interacts (via C-terminal ankyrin repeat) with rab-10 (GTP-bound form); the interaction is required for cnt-1 recruitment to endosomes. Interacts (via C-terminal ankyrin repeat) with rab-8 (GTP-bound form) and rab-35 (GTP-bound form). In terms of processing, cleaved by caspase ced-3 after Asp-382 and Asp-609. Cleavage at Asp-382 is required for subsequent cleavage at Asp-609.

The protein localises to the cytoplasm. It localises to the recycling endosome membrane. It is found in the basolateral cell membrane. Its subcellular location is the apical cell membrane. The protein resides in the cell membrane. GTPase-activating protein for the ADP ribosylation factor family. Regulates endosome recycling downstream of rab-10 and upstream of arf-6. Its function is as follows. Promotes apoptosis during embryonic development. Produced by caspase ced-3-mediated cleavage, and translocates to the plasma membrane where it prevents the activation of the prosurvival Akt-1/2 and sgk-1 signaling pathway by competing with Akt-1/2 for the binding to PtdIns(3,4,5)P3. The protein is Arf-GAP with ANK repeat and PH domain-containing protein cnt-1 of Caenorhabditis elegans.